The sequence spans 354 residues: Uroporphyrinogen decarboxylase (354 aa).

Residues 28–32 (RQAGR), Asp-78, Tyr-155, Ser-210, and His-325 contribute to the substrate site.

The protein belongs to the uroporphyrinogen decarboxylase family. As to quaternary structure, homodimer.

The protein resides in the cytoplasm. It carries out the reaction uroporphyrinogen III + 4 H(+) = coproporphyrinogen III + 4 CO2. The protein operates within porphyrin-containing compound metabolism; protoporphyrin-IX biosynthesis; coproporphyrinogen-III from 5-aminolevulinate: step 4/4. Functionally, catalyzes the decarboxylation of four acetate groups of uroporphyrinogen-III to yield coproporphyrinogen-III. This Trichodesmium erythraeum (strain IMS101) protein is Uroporphyrinogen decarboxylase.